Consider the following 2242-residue polypeptide: Large tegument protein deneddylase (2242 aa).

The interval 1–238 (MKVTQASCHQ…IDLTGVVRES (238 aa)) is deubiquitination activity. In terms of domain architecture, Peptidase C76 spans 4 to 226 (TQASCHQGDI…AARLVSTYRD (223 aa)). Catalysis depends on residues cysteine 24, aspartate 160, and histidine 162. The disordered stretch occupies residues 239 to 318 (ADTAATTTTA…KTLATASSSS (80 aa)). The segment covering 240 to 250 (DTAATTTTAAP) has biased composition (low complexity). The segment covering 251–268 (SLPPLPDPIVDPGCPPGV) has biased composition (pro residues). Residues 304–318 (PSTTSKTLATASSSS) show a composition bias toward low complexity. Residues 328–332 (SSAVP) are interaction with inner tegument protein. The segment covering 1173–1190 (SQQKMEGQLQETRQQMTE) has biased composition (polar residues). The tract at residues 1173 to 1229 (SQQKMEGQLQETRQQMTETSERLDRSLRQDPGSSSVTRVPEKPFKGQELAGRITPPP) is disordered. A compositionally biased stretch (basic and acidic residues) spans 1191–1200 (TSERLDRSLR).

This sequence belongs to the herpesviridae large tegument protein family. Interacts with host CUL1 and CUL4A; these interactions inhibit the E3 ligase activity of cullins. Interacts with inner tegument protein. Interacts with capsid vertex specific component CVC2. Interacts with the major capsid protein/MCP.

It localises to the virion tegument. The protein localises to the host cytoplasm. It is found in the host nucleus. It catalyses the reaction Thiol-dependent hydrolysis of ester, thioester, amide, peptide and isopeptide bonds formed by the C-terminal Gly of ubiquitin (a 76-residue protein attached to proteins as an intracellular targeting signal).. Large tegument protein that plays multiple roles in the viral cycle. During viral entry, remains associated with the capsid while most of the tegument is detached and participates in the capsid transport toward the host nucleus. Plays a role in the routing of the capsid at the nuclear pore complex and subsequent uncoating. Within the host nucleus, acts as a deneddylase and promotes the degradation of nuclear CRLs (cullin-RING ubiquitin ligases) and thereby stabilizes nuclear CRL substrates, while cytoplasmic CRLs remain unaffected. These modifications prevent host cell cycle S-phase progression and create a favorable environment allowing efficient viral genome replication. Participates later in the secondary envelopment of capsids. Indeed, plays a linker role for the association of the outer viral tegument to the capsids together with the inner tegument protein. The protein is Large tegument protein deneddylase of Homo sapiens (Human).